The chain runs to 280 residues: 2-dehydro-3-deoxyphosphooctonate aldolase (280 aa).

The protein belongs to the KdsA family.

The protein localises to the cytoplasm. It catalyses the reaction D-arabinose 5-phosphate + phosphoenolpyruvate + H2O = 3-deoxy-alpha-D-manno-2-octulosonate-8-phosphate + phosphate. Its pathway is carbohydrate biosynthesis; 3-deoxy-D-manno-octulosonate biosynthesis; 3-deoxy-D-manno-octulosonate from D-ribulose 5-phosphate: step 2/3. It participates in bacterial outer membrane biogenesis; lipopolysaccharide biosynthesis. The sequence is that of 2-dehydro-3-deoxyphosphooctonate aldolase from Nitrosococcus oceani (strain ATCC 19707 / BCRC 17464 / JCM 30415 / NCIMB 11848 / C-107).